A 117-amino-acid chain; its full sequence is Minor capsid protein VP2 (117 aa).

This sequence belongs to the lagovirus VP2 protein family. In terms of assembly, homooligomer. The portal-like structure consists in 12 copies of VP2. Interacts with capsid protein VP1.

The protein resides in the virion. It is found in the host cytoplasm. In terms of biological role, minor structural protein that forms a portal-like structure at a unique three-fold axis of symmetry, following binding to the host receptor. The channel formed by VP2 may allow the delivery of the viral genome through the host endosomal membrane. In Oryctolagus cuniculus (Rabbit), this protein is Minor capsid protein VP2.